Consider the following 126-residue polypeptide: Plastocyanin (126 aa).

Residues 1–28 (MSKKFLTILAGLLLVVSSFFLSVSPAAA) form the signal peptide. The 98-residue stretch at 29-126 (ANATVKMGSD…AGMVGKVVVE (98 aa)) folds into the Plastocyanin-like domain. Residues histidine 67, cysteine 111, histidine 114, and methionine 119 each coordinate Cu cation.

Belongs to the plastocyanin family. Cu(2+) is required as a cofactor.

The protein resides in the cellular thylakoid membrane. In terms of biological role, participates in electron transfer between P700 and the cytochrome b6-f complex in photosystem I. The polypeptide is Plastocyanin (petE) (Synechocystis sp. (strain ATCC 27184 / PCC 6803 / Kazusa)).